Here is a 160-residue protein sequence, read N- to C-terminus: Non-secretory ribonuclease (160 aa).

Positions 1–27 (MVPKLFTSPICLLLLLGLMGVEGSLHA) are cleaved as a signal peptide. Trp-34 carries a C-linked (Man) tryptophan glycan. His-42 acts as the Proton acceptor in catalysis. A glycan (N-linked (GlcNAc...) asparagine) is linked at Asn-44. 4 disulfide bridges follow: Cys-50–Cys-110, Cys-64–Cys-122, Cys-82–Cys-137, and Cys-89–Cys-98. Tyr-60 is modified (3'-nitrotyrosine). 65–69 (KNQNT) contributes to the substrate binding site. N-linked (GlcNAc...) asparagine glycans are attached at residues Asn-92, Asn-111, and Asn-138. Residue His-155 is the Proton donor of the active site.

Belongs to the pancreatic ribonuclease family. Interacts with and forms a tight 1:1 complex with RNH1. Dimerization of two such complexes may occur.

It is found in the lysosome. The protein localises to the cytoplasmic granule. The catalysed reaction is an [RNA] containing cytidine + H2O = an [RNA]-3'-cytidine-3'-phosphate + a 5'-hydroxy-ribonucleotide-3'-[RNA].. It catalyses the reaction an [RNA] containing uridine + H2O = an [RNA]-3'-uridine-3'-phosphate + a 5'-hydroxy-ribonucleotide-3'-[RNA].. Its function is as follows. This is a non-secretory ribonuclease. It is a pyrimidine specific nuclease with a slight preference for U. Cytotoxin and helminthotoxin. Possesses a wide variety of biological activities. The sequence is that of Non-secretory ribonuclease (RNASE2) from Macaca nemestrina (Pig-tailed macaque).